We begin with the raw amino-acid sequence, 439 residues long: Cell division protein DivIB (439 aa).

Disordered regions lie at residues 1–96 and 119–149; these read MDDK…DSNI and DNEQ…KSKV. Topologically, residues 1–173 are cytoplasmic; the sequence is MDDKTKNDQQ…RRKRQKRIQY (173 aa). Residues 11–20 are compositionally biased toward acidic residues; the sequence is ESNEDKDELE. A compositionally biased stretch (basic residues) spans 26-38; that stretch reads TSKKRRQRKRSKA. Residues 64–76 show a composition bias toward basic and acidic residues; the sequence is KDFKKEESNDKNN. Residues 77-86 are compositionally biased toward low complexity; that stretch reads DSASSHANDN. The segment covering 87-96 has biased composition (acidic residues); it reads NIDDSTDSNI. Positions 119–133 are enriched in polar residues; that stretch reads DNEQPQSAPKEQNSD. Residues 174 to 194 form a helical membrane-spanning segment; the sequence is SVITILVLLIAVILIYMFSPL. In terms of domain architecture, POTRA spans 195 to 263; it reads SKIAHVNING…NTLNVDITEN (69 aa). At 195–439 the chain is on the extracellular side; it reads SKIAHVNING…KINKQSSKNN (245 aa). The interval 396–439 is disordered; that stretch reads YRGNTSSQSESDKNVTKSSQEENQAKEELQSVLNKINKQSSKNN. Over residues 405-424 the composition is skewed to basic and acidic residues; it reads ESDKNVTKSSQEENQAKEEL. Polar residues predominate over residues 426-439; it reads SVLNKINKQSSKNN.

This sequence belongs to the FtsQ/DivIB family. DivIB subfamily.

The protein resides in the cell membrane. Cell division protein that may be involved in stabilizing or promoting the assembly of the division complex. The chain is Cell division protein DivIB from Staphylococcus aureus (strain NCTC 8325 / PS 47).